Reading from the N-terminus, the 363-residue chain is Mannose-1-phosphate guanyltransferase (363 aa).

Belongs to the transferase hexapeptide repeat family.

The protein resides in the cytoplasm. It catalyses the reaction alpha-D-mannose 1-phosphate + GTP + H(+) = GDP-alpha-D-mannose + diphosphate. It participates in nucleotide-sugar biosynthesis; GDP-alpha-D-mannose biosynthesis; GDP-alpha-D-mannose from alpha-D-mannose 1-phosphate (GTP route): step 1/1. Involved in cell wall synthesis where it is required for glycosylation. Involved in cell cycle progression through cell-size checkpoint. This Yarrowia lipolytica (strain CLIB 122 / E 150) (Yeast) protein is Mannose-1-phosphate guanyltransferase (MPG1).